We begin with the raw amino-acid sequence, 228 residues long: Ribonuclease HII (228 aa).

One can recognise an RNase H type-2 domain in the interval 26–214 (RAVAGVDEVG…VRAHSRFPLD (189 aa)). Asp-32, Glu-33, and Asp-124 together coordinate a divalent metal cation.

Belongs to the RNase HII family. The cofactor is Mn(2+). It depends on Mg(2+) as a cofactor.

It is found in the cytoplasm. The enzyme catalyses Endonucleolytic cleavage to 5'-phosphomonoester.. Functionally, endonuclease that specifically degrades the RNA of RNA-DNA hybrids. The protein is Ribonuclease HII of Solibacter usitatus (strain Ellin6076).